Consider the following 143-residue polypeptide: Small ribosomal subunit protein uS9 (143 aa).

The interval 123 to 143 (RPEPKKFGGRGARARFQKSYR) is disordered. The segment covering 134–143 (ARARFQKSYR) has biased composition (basic residues).

Belongs to the universal ribosomal protein uS9 family.

This Eremothecium gossypii (strain ATCC 10895 / CBS 109.51 / FGSC 9923 / NRRL Y-1056) (Yeast) protein is Small ribosomal subunit protein uS9 (RPS16).